The sequence spans 272 residues: Cerberus (272 aa).

The first 17 residues, 1 to 17 (MHLLLVQLLVLLPLGKA), serve as a signal peptide directing secretion. Disulfide bonds link C162/C209, C176/C223, C186/C239, and C190/C241. Residues 162–246 (CRTVPFNQTI…EECQCMVKTE (85 aa)) form the CTCK domain. 2 N-linked (GlcNAc...) asparagine glycosylation sites follow: N168 and N222.

This sequence belongs to the DAN family. In terms of assembly, forms monomers and predominantly dimers. Post-translationally, N-glycosylated.

The protein resides in the secreted. Its function is as follows. Cytokine that may play a role in anterior neural induction and somite formation during embryogenesis in part, through a BMP-inhibitory mechanism. Can regulate Nodal signaling during gastrulation as well as the formation and patterning of the primitive streak. This is Cerberus (Cer1) from Mus musculus (Mouse).